Here is a 158-residue protein sequence, read N- to C-terminus: C-type lectin BML-1 (158 aa).

The N-terminal stretch at 1–23 (MGHFTFTGLCLLAMFLSLRGAEC) is a signal peptide. Cystine bridges form between cysteine 26/cysteine 37, cysteine 54/cysteine 154, cysteine 61/cysteine 156, and cysteine 129/cysteine 146. The 123-residue stretch at 33–155 (KNGLCYKVFS…CAALRPFLCQ (123 aa)) folds into the C-type lectin domain. Ca(2+)-binding residues include glutamine 119, aspartate 121, and glutamate 127. The short motif at 119-121 (QPD) is the Galactose-binding element. N-linked (GlcNAc...) asparagine glycosylation is present at asparagine 134. 2 residues coordinate Ca(2+): asparagine 142 and aspartate 143.

The protein belongs to the true venom lectin family. In terms of assembly, homodimer; non-covalently linked. In terms of tissue distribution, expressed by the venom gland.

It localises to the secreted. Its function is as follows. Recombinant C-type lectin BML-1 is able to agglutinate erythrocytes. May be a calcium-dependent lectin. In Bungarus multicinctus (Many-banded krait), this protein is C-type lectin BML-1.